The sequence spans 475 residues: Ankyrin repeat, SAM and basic leucine zipper domain-containing protein 1 (475 aa).

The segment at 1–23 is disordered; sequence MAAARFRGLAVAGGGESSESEDD. 3 positions are modified to phosphoserine: serine 17, serine 18, and serine 20. ANK repeat units follow at residues 45-74, 78-107, 110-144, 148-177, 181-210, and 214-243; these read EKNE…SVDS, YGWT…KASF, DKQT…DPNV, RLMT…EVNT, NGYT…NKML, and DGKT…PLEG. Residues 272 to 334 enclose the SAM domain; the sequence is SYTAFGDLEI…KILAALKELE (63 aa).

Interacts with DDX4, PIWIL1, RANBP9 and TDRD1.

The protein localises to the cytoplasm. Its function is as follows. Plays a central role during spermatogenesis by repressing transposable elements and preventing their mobilization, which is essential for the germline integrity. Acts via the piRNA metabolic process, which mediates the repression of transposable elements during meiosis by forming complexes composed of piRNAs and Piwi proteins and governs the methylation and subsequent repression of transposons. Its association with pi-bodies suggests a participation in the primary piRNAs metabolic process. Required prior to the pachytene stage to facilitate the production of multiple types of piRNAs, including those associated with repeats involved in the regulation of retrotransposons. May act by mediating protein-protein interactions during germ cell maturation. The chain is Ankyrin repeat, SAM and basic leucine zipper domain-containing protein 1 (ASZ1) from Equus caballus (Horse).